Here is a 531-residue protein sequence, read N- to C-terminus: SWI/SNF-related matrix-associated actin-dependent regulator of chromatin subfamily D member 2 (531 aa).

2 positions are modified to asymmetric dimethylarginine: Arg-81 and Arg-104. A Phosphoserine modification is found at Ser-203. The tract at residues 205–227 is disordered; sequence SKAEGDTAGTTGTPGGTPAGDKV. At Thr-217 the chain carries Phosphothreonine. A Glycyl lysine isopeptide (Lys-Gly) (interchain with G-Cter in SUMO2) cross-link involves residue Lys-226. The SWIB/MDM2 domain occupies 306–383; the sequence is HQPPQYKLDP…PMKLAGLLQH (78 aa).

It belongs to the SMARCD family. As to quaternary structure, component of the multiprotein chromatin-remodeling complexes SWI/SNF: SWI/SNF-A (BAF), SWI/SNF-B (PBAF) and related complexes. The canonical complex contains a catalytic subunit (either SMARCA4/BRG1/BAF190A or SMARCA2/BRM/BAF190B), and at least SMARCE1, ACTL6A/BAF53, SMARCC1/BAF155, SMARCC2/BAF170, and SMARCB1/SNF5/BAF47. Other subunits specific to each of the complexes may also be present permitting several possible combinations developmentally and tissue specific. Component of the BAF complex, which includes at least actin (ACTB), ARID1A/BAF250A, ARID1B/BAF250B, SMARCA2/BRM, SMARCA4/BRG1, ACTL6A/BAF53, ACTL6B/BAF53B, SMARCE1/BAF57, SMARCC1/BAF155, SMARCC2/BAF170, SMARCB1/SNF5/INI1, and one or more SMARCD1/BAF60A, SMARCD2/BAF60B, or SMARCD3/BAF60C. In muscle cells, the BAF complex also contains DPF3. Component of the SWI/SNF-B (PBAF) chromatin remodeling complex, at least composed of SMARCA4/BRG1, SMARCB1/BAF47/SNF5, ACTL6A/BAF53A or ACTL6B/BAF53B, SMARCE1/BAF57, SMARCD1/BAF60A, SMARCD2/BAF60B, perhaps SMARCD3/BAF60C, SMARCC1/BAF155, SMARCC2/BAF170, PBRM1/BAF180, ARID2/BAF200 and actin (ACTB). Interacts with UNKL. Interacts with CEBPE. Ubiquitinated through a signaling process involving RAC1 and the RING finger protein UNKL.

It is found in the nucleus. Its function is as follows. Involved in transcriptional activation and repression of select genes by chromatin remodeling (alteration of DNA-nucleosome topology). Component of SWI/SNF chromatin remodeling complexes that carry out key enzymatic activities, changing chromatin structure by altering DNA-histone contacts within a nucleosome in an ATP-dependent manner. Critical regulator of myeloid differentiation, controlling granulocytopoiesis and the expression of genes involved in neutrophil granule formation. The chain is SWI/SNF-related matrix-associated actin-dependent regulator of chromatin subfamily D member 2 (SMARCD2) from Bos taurus (Bovine).